Reading from the N-terminus, the 488-residue chain is MVNQDISKLSLNECPGSVIVISNRLPVTIKKDEKTGEYEYSMSSGGLVTALQGLKKSTTFQWYGWPGLEVPDEDKAKVKRELLEKFNAIPIFLSDEVADLHYNGFSNSILWPLFHYHPGEITFDDTAWLAYNEANMAFADEIEGNINDNDVVWVHDYHLMLLPEMIRQRVIAKKLKNIKIGWFLHTPFPSSEIYRILPVRQEILKGVLSCDLIGFHTYDYARHFLSAVQRILNVNTLPNGVEFDGRFVNVGAFPIGIDVETFTEGLKQDAVIKRIKELKESFKGCKIIIGVDRLDYIKGVPQKLHALEVFLGAHPEWIGKVVLVQVAVPSRGDVEEYQYLRSVVNELVGRINGQFGTAEFVPIHFMHRSIPFQELISLYAVSDVCLVSSTRDGMNLVSYEYISCQEEKKGTLILSEFTGAAQSLNGALIVNPWNTDDLAESINEALTVPEEKRAANWEKLYKYISKYTSAFWGENFVHELYRLGSSNN.

D-glucose 6-phosphate contacts are provided by Tyr-102 and Asp-156. Residues Arg-293 and Lys-298 each coordinate UDP. UDP-alpha-D-glucose-binding residues include Arg-293 and Lys-298. Arg-331 is a binding site for D-glucose 6-phosphate. UDP contacts are provided by residues Ile-370 and 396 to 400; that span reads LVSYE. Residues Ile-370 and 392–400 each bind UDP-alpha-D-glucose; that span reads DGMNLVSYE.

Belongs to the glycosyltransferase 20 family. As to quaternary structure, trehalose synthase/phosphatase complex contains three or four polypeptides of 56 kDa (TPS1), 102 kDa (TPS2), 115 kDa (TPS3) and 123 kDa (TSL1).

The enzyme catalyses D-glucose 6-phosphate + UDP-alpha-D-glucose = alpha,alpha-trehalose 6-phosphate + UDP + H(+). It functions in the pathway carbohydrate biosynthesis. Functionally, synthase catalytic subunit of the trehalose synthase complex that catalyzes the production of trehalose from glucose-6-phosphate and UDP-alpha-D-glucose in a two step process. Can function independently of the complex. The protein is Alpha,alpha-trehalose-phosphate synthase [UDP-forming] 56 kDa subunit of Kluyveromyces lactis (strain ATCC 8585 / CBS 2359 / DSM 70799 / NBRC 1267 / NRRL Y-1140 / WM37) (Yeast).